The sequence spans 178 residues: Ribosome maturation factor RimM (178 aa).

The PRC barrel domain maps to 99 to 178 (QGEFYWRDLI…EITVDWDPGF (80 aa)).

The protein belongs to the RimM family. Binds ribosomal protein uS19.

The protein resides in the cytoplasm. An accessory protein needed during the final step in the assembly of 30S ribosomal subunit, possibly for assembly of the head region. Essential for efficient processing of 16S rRNA. May be needed both before and after RbfA during the maturation of 16S rRNA. It has affinity for free ribosomal 30S subunits but not for 70S ribosomes. In Pseudoalteromonas translucida (strain TAC 125), this protein is Ribosome maturation factor RimM.